Consider the following 408-residue polypeptide: Type II methyltransferase M.VspI (408 aa).

It belongs to the N(4)/N(6)-methyltransferase family.

The enzyme catalyses a 2'-deoxyadenosine in DNA + S-adenosyl-L-methionine = an N(6)-methyl-2'-deoxyadenosine in DNA + S-adenosyl-L-homocysteine + H(+). Its function is as follows. A gamma subtype methylase, recognizes the double-stranded sequence 5'-ATTAAT-3', methylates A-5 on both strands, and protects the DNA from cleavage by the VspI endonuclease. This is Type II methyltransferase M.VspI from Vibrio sp. (strain 343).